Reading from the N-terminus, the 106-residue chain is Urease subunit beta (106 aa).

The protein belongs to the urease beta subunit family. In terms of assembly, heterotrimer of UreA (gamma), UreB (beta) and UreC (alpha) subunits. Three heterotrimers associate to form the active enzyme.

The protein localises to the cytoplasm. It catalyses the reaction urea + 2 H2O + H(+) = hydrogencarbonate + 2 NH4(+). It participates in nitrogen metabolism; urea degradation; CO(2) and NH(3) from urea (urease route): step 1/1. The chain is Urease subunit beta from Citrobacter koseri (strain ATCC BAA-895 / CDC 4225-83 / SGSC4696).